We begin with the raw amino-acid sequence, 363 residues long: Pyrimidine monooxygenase RutA (363 aa).

FMN-binding positions include 49–50 (IK), Asn115, Glu124, 140–141 (RY), and Ser190.

The protein belongs to the NtaA/SnaA/DszA monooxygenase family. RutA subfamily.

The catalysed reaction is uracil + FMNH2 + NADH + O2 = (Z)-3-ureidoacrylate + FMN + NAD(+) + H2O + H(+). It catalyses the reaction thymine + FMNH2 + NADH + O2 = (Z)-2-methylureidoacrylate + FMN + NAD(+) + H2O + H(+). Its function is as follows. Catalyzes the pyrimidine ring opening between N-3 and C-4 by an unusual flavin hydroperoxide-catalyzed mechanism, adding oxygen atoms in the process to yield ureidoacrylate peracid, that immediately reacts with FMN forming ureidoacrylate and FMN-N(5)-oxide. The FMN-N(5)-oxide reacts spontaneously with NADH to produce FMN. Requires the flavin reductase RutF to regenerate FMN in vivo. The chain is Pyrimidine monooxygenase RutA from Escherichia coli O127:H6 (strain E2348/69 / EPEC).